The following is a 1889-amino-acid chain: Bromodomain adjacent to zinc finger domain protein 2A (1889 aa).

Disordered regions lie at residues 1–59 (MEME…NGLS), 384–433 (FGLN…SPAA), and 479–526 (TTPV…GAVA). Residues 35 to 59 (TNGSPMNFPQQGKSLNGDVNVNGLS) are compositionally biased toward polar residues. A required for TTF1 binding region spans residues 332–726 (EGNPVISALD…ESQTPVQGQA (395 aa)). A compositionally biased stretch (low complexity) spans 423-433 (PAVSPTASPAA). Polar residues-rich tracts occupy residues 479–489 (TTPVTSPQGSP) and 498–509 (QTVSPARKNVSS). T499 is subject to Phosphothreonine. S501 is subject to Phosphoserine. Residues 538 to 609 (IATPEEVRLP…EHFSFSPRMP (72 aa)) enclose the MBD domain. A Phosphothreonine modification is found at T540. S605 bears the Phosphoserine mark. The tract at residues 638–791 (QAITGKRGRP…ARPSCRADKT (154 aa)) is disordered. 2 consecutive DNA-binding regions (a.T hook) follow at residues 641-653 (TGKRGRPRNNEKA) and 662-674 (KRGRGRPPKIKMP). Residues 648 to 660 (RNNEKAKNKEVPK) are compositionally biased toward basic and acidic residues. Residues 661 to 670 (VKRGRGRPPK) are compositionally biased toward basic residues. Residue K672 is modified to N6-acetyllysine; by KAT8. Basic and acidic residues predominate over residues 678-701 (NKTDNRLPKKLETQEILSEDDKAK). Residues 686 to 813 (KKLETQEILS…QQAILEEMKK (128 aa)) are a coiled coil. A compositionally biased stretch (basic residues) spans 702–713 (MTKNKKKMRQKV). Over residues 716-726 (GESQTPVQGQA) the composition is skewed to polar residues. Composition is skewed to basic and acidic residues over residues 731–740 (KQDTKSLKQK) and 748–791 (AEKE…ADKT). K790 is subject to N6-acetyllysine. The DDT domain maps to 839-904 (SRAFSDCLTI…LKAALHDPGL (66 aa)). A Glycyl lysine isopeptide (Lys-Gly) (interchain with G-Cter in SUMO2) cross-link involves residue K857. The segment at 1039–1063 (EETSGIEEEEEEENTTAVHGRRGRK) is disordered. Residue S1042 is modified to Phosphoserine. A compositionally biased stretch (acidic residues) spans 1042–1052 (SGIEEEEEEEN). Residues K1141 and K1163 each participate in a glycyl lysine isopeptide (Lys-Gly) (interchain with G-Cter in SUMO2) cross-link. Disordered regions lie at residues 1147–1247 (LMEV…GQSQ) and 1269–1397 (LSSS…GRPP). A Phosphoserine modification is found at S1174. The a.T hook 3 DNA-binding region spans 1176–1188 (ARSRGRPRKPKPG). Composition is skewed to polar residues over residues 1190–1231 (LQPQ…QPSS), 1269–1278 (LSSSVLTPDS), and 1331–1346 (DQPTPSLQLLASSKPM). Phosphoserine occurs at positions 1374, 1377, and 1383. The segment at residues 1390–1402 (PKRRGRPPSKFFK) is a DNA-binding region (a.T hook 4). The residue at position 1545 (S1545) is a Phosphoserine. Glycyl lysine isopeptide (Lys-Gly) (interchain with G-Cter in SUMO2) cross-links involve residues K1662 and K1695. The PHD-type zinc-finger motif lies at 1662–1712 (KVTCLVCRKGDNDEFLLLCDGCDRGCHIYCHRPKMEAVPEGDWFCAVCLSQ). Residues 1720–1778 (QRPGFPKRGQKRKSSFPLTFPEGDSRRRMLSRSRDSPAVPRYPEDGLSPPKRRRHSMRS) are disordered. S1733 is subject to Phosphoserine. T1738 bears the Phosphothreonine mark. The segment covering 1742 to 1754 (GDSRRRMLSRSRD) has biased composition (basic and acidic residues). A phosphoserine mark is found at S1755 and S1767. A compositionally biased stretch (basic residues) spans 1769 to 1778 (PKRRRHSMRS). The 105-residue stretch at 1777-1881 (RSHHSDLTFC…RFFESRWEEF (105 aa)) folds into the Bromo domain.

Belongs to the WAL family. As to quaternary structure, component of the NoRC-1 ISWI chromatin remodeling complex at least composed of SMARCA1 and BAZ2A/TIP5, which regulates the spacing of histone octamers on the DNA template to facilitate access to DNA. Within the NoRC-1 ISWI chromatin remodeling complex interacts with SMARCA1; the interaction is direct. Component of the NoRC-5 ISWI chromatin remodeling complex (also called the NoRC nucleolar-remodeling complex), at least composed of SMARCA5/SNF2H and BAZ2A/TIP5, which regulates the spacing of histone octamers on the DNA template to facilitate access to DNA. Within the NoRC-5 ISWI chromatin remodeling complexes interacts with SMARCA5/SNF2H; the interaction is direct. Interacts with TTF1; the interaction is required for recruitment of the NoRC-5 ISWI chromatin remodeling complex to rDNA. Interacts with HDAC1. Interacts with SIN3A. Interacts with DNMT1 and DNM3B. Interacts with BEND3 and USP21. In terms of processing, ubiquitinated. Deubiquitinated by USP21 leading to its stabilization. Acetylation at Lys-672 by KAT8/MOF promotes its dissociation from pRNA, affecting heterochromatin formation, nucleosome positioning and rDNA silencing. Deacetylation by SIRT1 in late S phase enhances pRNA-binding, allowing de novo DNA methylation and heterochromatin formation. Acetylation is high during S phase and declines to background levels in late S phase when the silent copies of rRNA genes are replicated.

The protein localises to the nucleus. Its subcellular location is the nucleolus. Functionally, regulatory subunit of the ATP-dependent NoRC-1 and NoRC-5 ISWI chromatin remodeling complexes, which form ordered nucleosome arrays on chromatin and facilitate access to DNA during DNA-templated processes such as DNA replication, transcription, and repair. Both complexes regulate the spacing of nucleosomes along the chromatin and have the ability to slide mononucleosomes to the center of a DNA template. Directly stimulates the ATPase activity of SMARCA5 in the NoRC-5 ISWI chromatin remodeling complex. The NoRC-1 ISWI chromatin remodeling complex has a lower ATP hydrolysis rate than the NoRC-5 ISWI chromatin remodeling complex. Within the NoRC-5 ISWI chromatin remodeling complex, mediates silencing of a fraction of rDNA by recruiting histone-modifying enzymes and DNA methyltransferases, leading to heterochromatin formation and transcriptional silencing. In the complex, it plays a central role by being recruited to rDNA and by targeting chromatin modifying enzymes such as HDAC1, leading to repress RNA polymerase I transcription. Recruited to rDNA via its interaction with TTF1 and its ability to recognize and bind histone H4 acetylated on 'Lys-16' (H4K16ac), leading to deacetylation of H4K5ac, H4K8ac, H4K12ac but not H4K16ac. Specifically binds pRNAs, 150-250 nucleotide RNAs that are complementary in sequence to the rDNA promoter; pRNA-binding is required for heterochromatin formation and rDNA silencing. This chain is Bromodomain adjacent to zinc finger domain protein 2A (Baz2a), found in Mus musculus (Mouse).